We begin with the raw amino-acid sequence, 89 residues long: Large ribosomal subunit protein eL34 (89 aa).

It belongs to the eukaryotic ribosomal protein eL34 family.

The sequence is that of Large ribosomal subunit protein eL34 (rpl34e) from Methanocaldococcus jannaschii (strain ATCC 43067 / DSM 2661 / JAL-1 / JCM 10045 / NBRC 100440) (Methanococcus jannaschii).